The following is a 299-amino-acid chain: Fibrinogen silencer-binding protein (299 aa).

Lysine 94 participates in a covalent cross-link: Glycyl lysine isopeptide (Lys-Gly) (interchain with G-Cter in SUMO2). The segment at 189–211 is disordered; sequence EGSESPSLSSVDMRMTSSPSSVP. The segment covering 192–209 has biased composition (polar residues); that stretch reads ESPSLSSVDMRMTSSPSS.

Interacts with APBA1 (via PDZ 1 and 2 domains).

It localises to the nucleus. Transcriptional repressor that down-regulates the expression of the fibrinogen gamma chain. Represses transcription of GSK3B gene promoter via its interaction with APBA1. This is Fibrinogen silencer-binding protein (Fsbp) from Mus musculus (Mouse).